A 374-amino-acid polypeptide reads, in one-letter code: DNA replication and repair protein RecF (374 aa).

ATP is bound at residue 34–41 (GNNGSGKT).

It belongs to the RecF family.

Its subcellular location is the cytoplasm. The RecF protein is involved in DNA metabolism; it is required for DNA replication and normal SOS inducibility. RecF binds preferentially to single-stranded, linear DNA. It also seems to bind ATP. The polypeptide is DNA replication and repair protein RecF (Allorhizobium ampelinum (strain ATCC BAA-846 / DSM 112012 / S4) (Agrobacterium vitis (strain S4))).